The sequence spans 1099 residues: Carbamoyl phosphate synthase large chain (1099 aa).

The carboxyphosphate synthetic domain stretch occupies residues 1 to 402 (MPKRTDLKSV…ALQKALRSLE (402 aa)). ATP is bound by residues R129, R169, G175, G176, E208, I210, E215, G241, V242, H243, Q285, and E299. The region spanning 133 to 328 (KGVVERCGAE…IAKIATKLSL (196 aa)) is the ATP-grasp 1 domain. Positions 285, 299, and 301 each coordinate Mg(2+). Mn(2+) is bound by residues Q285, E299, and N301. The interval 403–546 (QKGSQLDFSH…YHYSSYDEED (144 aa)) is oligomerization domain. The interval 547–950 (EVALHSKPSI…AFAKSQAAAN (404 aa)) is carbamoyl phosphate synthetic domain. An ATP-grasp 2 domain is found at 677 to 868 (SRVLDEAGLI…MAKAAALIGT (192 aa)). ATP contacts are provided by R713, R752, L754, E759, G784, I785, H786, S787, Q827, and E839. The Mg(2+) site is built by Q827, E839, and N841. Mn(2+)-binding residues include Q827, E839, and N841. In terms of domain architecture, MGS-like spans 951 to 1099 (NALPTEGKIF…AENLKALQNG (149 aa)). Residues 951–1099 (NALPTEGKIF…AENLKALQNG (149 aa)) are allosteric domain.

Belongs to the CarB family. As to quaternary structure, composed of two chains; the small (or glutamine) chain promotes the hydrolysis of glutamine to ammonia, which is used by the large (or ammonia) chain to synthesize carbamoyl phosphate. Tetramer of heterodimers (alpha,beta)4. Mg(2+) serves as cofactor. Requires Mn(2+) as cofactor.

It carries out the reaction hydrogencarbonate + L-glutamine + 2 ATP + H2O = carbamoyl phosphate + L-glutamate + 2 ADP + phosphate + 2 H(+). The enzyme catalyses hydrogencarbonate + NH4(+) + 2 ATP = carbamoyl phosphate + 2 ADP + phosphate + 2 H(+). Its pathway is amino-acid biosynthesis; L-arginine biosynthesis; carbamoyl phosphate from bicarbonate: step 1/1. It participates in pyrimidine metabolism; UMP biosynthesis via de novo pathway; (S)-dihydroorotate from bicarbonate: step 1/3. Functionally, large subunit of the glutamine-dependent carbamoyl phosphate synthetase (CPSase). CPSase catalyzes the formation of carbamoyl phosphate from the ammonia moiety of glutamine, carbonate, and phosphate donated by ATP, constituting the first step of 2 biosynthetic pathways, one leading to arginine and/or urea and the other to pyrimidine nucleotides. The large subunit (synthetase) binds the substrates ammonia (free or transferred from glutamine from the small subunit), hydrogencarbonate and ATP and carries out an ATP-coupled ligase reaction, activating hydrogencarbonate by forming carboxy phosphate which reacts with ammonia to form carbamoyl phosphate. This is Carbamoyl phosphate synthase large chain from Arthrobacter sp. (strain FB24).